The primary structure comprises 160 residues: RTX-II toxin-activating lysine-acyltransferase ApxIIC (160 aa).

Residues H23 and D92 contribute to the active site.

Belongs to the RTX toxin acyltransferase family. As to quaternary structure, homodimer.

It is found in the cytoplasm. It carries out the reaction a fatty acyl-[ACP] + L-lysyl-[protein] = N(6)-(fatty acyl)-L-lysyl-[protein] + holo-[ACP] + H(+). Protein-lysine acyltransferase that catalyzes fatty acylation of the protoxin, thereby converting it to the active toxin. The protein is RTX-II toxin-activating lysine-acyltransferase ApxIIC (apxIIC) of Actinobacillus pleuropneumoniae (Haemophilus pleuropneumoniae).